The chain runs to 195 residues: Probable thymidylate kinase (195 aa).

7–14 (GIDGVGKT) lines the ATP pocket.

It belongs to the thymidylate kinase family.

The enzyme catalyses dTMP + ATP = dTDP + ADP. The chain is Probable thymidylate kinase from Methanosphaera stadtmanae (strain ATCC 43021 / DSM 3091 / JCM 11832 / MCB-3).